The following is a 388-amino-acid chain: MNYQPTPEDRFTFGLWTVGWQGRDPFGDATRRALDPVETVQRLAGLGAHGVTFHDDDLIPFGSSDTERESHIKRFRQALDATGMAVPMATTNLFTHPVFKDGAFTANDRDVRRYALRKTIRNIDLAAELGAKTYVAWGGREGAESGAAKDVRVALDRMKEAFDLLGEYVTAQGYDLRFAIEPKPNEPRGDILLPTVGHALAFIERLERPELYGVNPEVGHEQMAGLNFPHGIAQALWAGKLFHIDLNGQSGIKYDQDLRFGAGDLRAAFWLVDLLESAGYEGPKHFDFKPPRTEDLDGVWASAAGCMRNYLILKERTAAFRADPEVQEALRAARLDELAQPTAGDGLTALLADRTAFEDFDVEAAAARGMAFEQLDQLAMDHLLGARG.

Catalysis depends on residues histidine 54 and aspartate 57. Mg(2+) is bound by residues glutamate 181, glutamate 217, histidine 220, aspartate 245, aspartate 255, aspartate 257, and aspartate 287.

It belongs to the xylose isomerase family. Homotetramer. The cofactor is Mg(2+).

It is found in the cytoplasm. It catalyses the reaction alpha-D-xylose = alpha-D-xylulofuranose. This chain is Xylose isomerase, found in Streptomyces avermitilis (strain ATCC 31267 / DSM 46492 / JCM 5070 / NBRC 14893 / NCIMB 12804 / NRRL 8165 / MA-4680).